Reading from the N-terminus, the 477-residue chain is Glycogen synthase (477 aa).

Lysine 15 serves as a coordination point for ADP-alpha-D-glucose.

It belongs to the glycosyltransferase 1 family. Bacterial/plant glycogen synthase subfamily.

It catalyses the reaction [(1-&gt;4)-alpha-D-glucosyl](n) + ADP-alpha-D-glucose = [(1-&gt;4)-alpha-D-glucosyl](n+1) + ADP + H(+). Its pathway is glycan biosynthesis; glycogen biosynthesis. Its function is as follows. Synthesizes alpha-1,4-glucan chains using ADP-glucose. This is Glycogen synthase from Cronobacter sakazakii (strain ATCC BAA-894) (Enterobacter sakazakii).